The chain runs to 898 residues: Histone-lysine N-methyltransferase mes-4 (898 aa).

The segment at 1–68 (MLPSSGDSSK…APILTNAPKD (68 aa)) is disordered. Residues 36-51 (QRNATPQGAGSETSSN) are compositionally biased toward polar residues. 2 consecutive PHD-type zinc fingers follow at residues 126–214 (DSKC…CNLD) and 303–355 (IKAC…CVCG). The region spanning 537–665 (EKIKLAATLC…DGDEITFSYN (129 aa)) is the SET domain. A Post-SET domain is found at 671–687 (NLPDCECGAENCMGTMG). The segment at 689–847 (AKREKPEVAD…SLQTIQETGK (159 aa)) is disordered. The span at 692-704 (EKPEVADSSEKAA) shows a compositional bias: basic and acidic residues. The span at 705–719 (KKNKSSKKKSVKNQN) shows a compositional bias: basic residues. 2 stretches are compositionally biased toward low complexity: residues 737–751 (ISPS…SSTS) and 761–773 (SQNK…NSNQ). Polar residues predominate over residues 774–788 (PVADTGSTLSTSTEL). A compositionally biased stretch (low complexity) spans 802 to 811 (SSRSRAASSS).

The protein belongs to the class V-like SAM-binding methyltransferase superfamily. Histone-lysine methyltransferase family. SET2 subfamily. As to expression, in adults, it is predominantly expressed in the germline, and weakly expressed in intestinal cells.

The protein resides in the nucleus. Its subcellular location is the chromosome. It catalyses the reaction L-lysyl(36)-[histone H3] + 2 S-adenosyl-L-methionine = N(6),N(6)-dimethyl-L-lysyl(36)-[histone H3] + 2 S-adenosyl-L-homocysteine + 2 H(+). Its function is as follows. Histone methyltransferase. Dimethylates 'Lys-36' of histone H3, a specific tag for epigenetic transcriptional activation. Plays a central role in early development and is responsible for all H3 'Lys-36' dimethylation until about the 40-cell stage. Indirectly involved in the global inactivation of the X chromosomes in germline cells, possibly by excluding the mes-2-mes-3-mes-6 repressive Polycomb complex from the autosomes. Not related to transcription elongation. Required for small-RNA-induced H3K27 trimethylation. May suppress sensitivity to RNAi. May regulate the expression of genes required for vulval development. The chain is Histone-lysine N-methyltransferase mes-4 from Caenorhabditis elegans.